The following is a 311-amino-acid chain: Olfactory receptor 1073 (311 aa).

Over 1–25 (MKQQNDTQILQFLLLGLSENTELQP) the chain is Extracellular. Residue N5 is glycosylated (N-linked (GlcNAc...) asparagine). The chain crosses the membrane as a helical span at residues 26–46 (LIYWLFFSMYLVTVWGNLIII). At 47–57 (LATVLDFRLHT) the chain is on the cytoplasmic side. A helical transmembrane segment spans residues 58–78 (AMYFFLCNLSFVDICLISTTI). The Extracellular segment spans residues 79–97 (PKMLANVHLNHKAITYEGC). The cysteines at positions 97 and 179 are disulfide-linked. Residues 98–118 (IMQIYFFTLFVGLDNFLLAVM) traverse the membrane as a helical segment. The Cytoplasmic segment spans residues 119–133 (AYDRFVAICHPLRYT). Residues 134–154 (SIMTPHLCMSLVLVSWIASVL) form a helical membrane-spanning segment. N155 carries an N-linked (GlcNAc...) asparagine glycan. Residues 155-196 (NSSLQSFLVLQLSFCTEVEIPHFFCELSMLVHLACSDTFLSD) lie on the Extracellular side of the membrane. A helical transmembrane segment spans residues 197–217 (MAMNVLAALLGGGCLVGILYS). Topologically, residues 218 to 244 (YSKIVSSIQAISSAEGKYKAFSTCVSH) are cytoplasmic. Residues 245–265 (LSVVSLFYCTLLGVYLSSAVT) form a helical membrane-spanning segment. The Extracellular portion of the chain corresponds to 266 to 271 (QNSHST). Residues 272–292 (AATSLMYTVVTPMLNPFIYSL) traverse the membrane as a helical segment. Topologically, residues 293–311 (RNDNIKRALKNFVKKKLEK) are cytoplasmic.

Belongs to the G-protein coupled receptor 1 family. Tongue specific.

The protein resides in the cell membrane. Its function is as follows. Possible taste receptor. The sequence is that of Olfactory receptor 1073 (Olr1073) from Rattus norvegicus (Rat).